Consider the following 339-residue polypeptide: uncharacterized protein (339 aa).

NADP(+) contacts are provided by Ile54, Lys78, Asp101, Asn128, Tyr213, and Lys217. The Proton donor role is filled by Tyr213. Catalysis depends on Lys217, which acts as the Lowers pKa of active site Tyr.

The protein belongs to the short-chain dehydrogenases/reductases (SDR) family.

This is an uncharacterized protein from Schizosaccharomyces pombe (strain 972 / ATCC 24843) (Fission yeast).